We begin with the raw amino-acid sequence, 110 residues long: Iron-sulfur cluster assembly protein CyaY (110 aa).

The protein belongs to the frataxin family.

In terms of biological role, involved in iron-sulfur (Fe-S) cluster assembly. May act as a regulator of Fe-S biogenesis. This Stutzerimonas stutzeri (strain A1501) (Pseudomonas stutzeri) protein is Iron-sulfur cluster assembly protein CyaY.